Consider the following 355-residue polypeptide: UPF0324 membrane protein PA5383 (355 aa).

Helical transmembrane passes span I20–G37, H44–P66, G71–L93, I100–A122, T137–V159, V166–F188, A233–L255, W275–V297, L307–I324, and P331–A353.

The protein belongs to the UPF0324 family.

The protein localises to the cell membrane. The sequence is that of UPF0324 membrane protein PA5383 from Pseudomonas aeruginosa (strain ATCC 15692 / DSM 22644 / CIP 104116 / JCM 14847 / LMG 12228 / 1C / PRS 101 / PAO1).